Reading from the N-terminus, the 471-residue chain is Argininosuccinate lyase (471 aa).

This sequence belongs to the lyase 1 family. Argininosuccinate lyase subfamily.

The protein resides in the cytoplasm. It catalyses the reaction 2-(N(omega)-L-arginino)succinate = fumarate + L-arginine. It participates in amino-acid biosynthesis; L-arginine biosynthesis; L-arginine from L-ornithine and carbamoyl phosphate: step 3/3. The polypeptide is Argininosuccinate lyase (Cereibacter sphaeroides (strain ATCC 17025 / ATH 2.4.3) (Rhodobacter sphaeroides)).